The chain runs to 300 residues: ClpXP adapter protein SpxH (300 aa).

It belongs to the SpxH family. In terms of assembly, interacts with Spx.

The protein localises to the cytoplasm. Its function is as follows. Adapter protein required for efficient degradation of Spx by ClpXP under non-stress conditions. Interaction with Spx stabilizes Spx and exposes the C-terminus of Spx for recognition and proteolysis by ClpXP. This is ClpXP adapter protein SpxH from Shouchella clausii (strain KSM-K16) (Alkalihalobacillus clausii).